The primary structure comprises 464 residues: DNA repair protein KRE29 (464 aa).

The interval 1–69 (MGSVNSSPNE…SDEEFSSLEN (69 aa)) is disordered. Over residues 53–65 (PENDSLNSDEEFS) the composition is skewed to acidic residues. 2 positions are modified to phosphoserine: S81 and S101.

As to quaternary structure, component of the Smc5-Smc6 complex which consists of KRE29, MMS21, NSE1, NSE3, NSE4, NSE5, SMC5 and SMC6. Interacts with NSE5.

Its subcellular location is the nucleus. The protein localises to the cytoplasm. Acts in a DNA repair pathway for removal of UV-induced DNA damage that is distinct from classical nucleotide excision repair and in repair of ionizing radiation damage. Functions in homologous recombination repair of DNA double strand breaks and in recovery of stalled replication forks. This Saccharomyces cerevisiae (strain ATCC 204508 / S288c) (Baker's yeast) protein is DNA repair protein KRE29 (KRE29).